The chain runs to 281 residues: uncharacterized protein (281 aa).

A run of 4 helical transmembrane segments spans residues 8–28 (ALPV…FIWS), 97–117 (LAVA…RGYG), 147–167 (PARI…GLAV), and 210–230 (IASV…IVPA).

This sequence to S.pombe bem46 and yeast YNL320w.

The protein localises to the cell membrane. This is an uncharacterized protein from Mycobacterium tuberculosis (strain ATCC 25618 / H37Rv).